The primary structure comprises 408 residues: 3-phosphoshikimate 1-carboxyvinyltransferase (408 aa).

3 residues coordinate 3-phosphoshikimate: lysine 10, serine 11, and arginine 15. Lysine 10 is a phosphoenolpyruvate binding site. 2 residues coordinate phosphoenolpyruvate: glycine 79 and arginine 107. Residues serine 150, serine 151, glutamine 152, serine 179, glutamate 297, and histidine 324 each contribute to the 3-phosphoshikimate site. Glutamine 152 is a binding site for phosphoenolpyruvate. Catalysis depends on glutamate 297, which acts as the Proton acceptor. Phosphoenolpyruvate-binding residues include arginine 328, arginine 369, and lysine 394.

The protein belongs to the EPSP synthase family. Monomer.

It is found in the cytoplasm. It carries out the reaction 3-phosphoshikimate + phosphoenolpyruvate = 5-O-(1-carboxyvinyl)-3-phosphoshikimate + phosphate. It functions in the pathway metabolic intermediate biosynthesis; chorismate biosynthesis; chorismate from D-erythrose 4-phosphate and phosphoenolpyruvate: step 6/7. Catalyzes the transfer of the enolpyruvyl moiety of phosphoenolpyruvate (PEP) to the 5-hydroxyl of shikimate-3-phosphate (S3P) to produce enolpyruvyl shikimate-3-phosphate and inorganic phosphate. The chain is 3-phosphoshikimate 1-carboxyvinyltransferase from Corynebacterium efficiens (strain DSM 44549 / YS-314 / AJ 12310 / JCM 11189 / NBRC 100395).